We begin with the raw amino-acid sequence, 526 residues long: Peptide chain release factor 3 (526 aa).

Positions 8-277 constitute a tr-type G domain; that stretch reads DKRRTFAIIS…GLTQWAPKPQ (270 aa). Residues 17–24, 85–89, and 139–142 contribute to the GTP site; these read SHPDAGKT, DTPGH, and NKLD.

The protein belongs to the TRAFAC class translation factor GTPase superfamily. Classic translation factor GTPase family. PrfC subfamily.

The protein localises to the cytoplasm. Increases the formation of ribosomal termination complexes and stimulates activities of RF-1 and RF-2. It binds guanine nucleotides and has strong preference for UGA stop codons. It may interact directly with the ribosome. The stimulation of RF-1 and RF-2 is significantly reduced by GTP and GDP, but not by GMP. This chain is Peptide chain release factor 3, found in Actinobacillus succinogenes (strain ATCC 55618 / DSM 22257 / CCUG 43843 / 130Z).